A 367-amino-acid chain; its full sequence is 2-aminoethylphosphonate--pyruvate transaminase (367 aa).

Residue K193 is modified to N6-(pyridoxal phosphate)lysine.

It belongs to the class-V pyridoxal-phosphate-dependent aminotransferase family. PhnW subfamily. As to quaternary structure, homodimer. Requires pyridoxal 5'-phosphate as cofactor.

The catalysed reaction is (2-aminoethyl)phosphonate + pyruvate = phosphonoacetaldehyde + L-alanine. Its function is as follows. Involved in phosphonate degradation. The sequence is that of 2-aminoethylphosphonate--pyruvate transaminase from Vibrio parahaemolyticus serotype O3:K6 (strain RIMD 2210633).